The sequence spans 492 residues: Zinc finger protein 385B (492 aa).

2 Matrin-type zinc fingers span residues 8-44 (KKLL…VKQL) and 143-173 (ISCN…KLKA). The disordered stretch occupies residues 159–206 (EAHYKGSKHAKKLKAQESPKNKQKSAVAQDSGTKTITSTSTNTTTTTT). Over residues 189 to 206 (SGTKTITSTSTNTTTTTT) the composition is skewed to low complexity. 2 Matrin-type zinc fingers span residues 303–337 (KKLL…LEAR) and 371–401 (FHCE…RVAG). Residues 388–420 (QHISSRRHKDRVAGKPTKPKYSPYNKQQRSSSS) form a disordered region.

The protein resides in the nucleus. In terms of biological role, may play a role in p53/TP53-mediated apoptosis. The protein is Zinc finger protein 385B (znf385b) of Danio rerio (Zebrafish).